We begin with the raw amino-acid sequence, 899 residues long: Solute carrier family 12 member 9 (899 aa).

Over 1 to 44 the chain is Cytoplasmic; sequence MTSESSPLLHYRLFSVSDGGLGPPDSSPIMTDAVTVGTGPTQRK. Residues 45-65 form a helical membrane-spanning segment; the sequence is LSTFFGVVVPTVLSMFSIVVF. Residues 66–80 lie on the Extracellular side of the membrane; sequence MRIGFVVGHAGLLQS. The chain crosses the membrane as a helical span at residues 81–101; sequence LLMLFVAYVIIWLTVLSVCAI. Residues 102–127 lie on the Cytoplasmic side of the membrane; that stretch reads STNGAVQGGGAYFMISRTLGPEFGGS. Residues 128–148 traverse the membrane as a helical segment; it reads IGLMFYLANVFACGVYVLGLV. Residues 149–176 are Extracellular-facing; it reads EAVLDVFGRDPSDVTDSLRSLPQGYGYS. A helical transmembrane segment spans residues 177-197; it reads FLYASIILLLCMAICLVGASI. Over 198 to 202 the chain is Cytoplasmic; that stretch reads YSQAS. The chain crosses the membrane as a helical span at residues 203–223; the sequence is FFIFLLVFVVLLTILISFLAV. Topologically, residues 224 to 266 are extracellular; that stretch reads RPLTVSIRHGGNVTMTGVYTGINSSTLHNNLQADYSLDYTTGN. N-linked (GlcNAc...) asparagine glycans are attached at residues Asn-235 and Asn-246. Residues 267–287 traverse the membrane as a helical segment; that stretch reads LMNFATVFAVMFNGCTGIMAG. The Cytoplasmic portion of the chain corresponds to 288–304; sequence CNLSGELKQPSRSIPMG. A helical transmembrane segment spans residues 305–325; that stretch reads TIIAVIITFFVYLILFIFTAF. Topologically, residues 326–347 are extracellular; the sequence is TCDRTLLREDYGFFRSINIWPP. A helical transmembrane segment spans residues 348–368; that stretch reads FVLIGVYATSLSASMSTLIGA. Residues 369-393 lie on the Cytoplasmic side of the membrane; it reads SRILHALAKDDLFGVLLAPAKLVSK. Residues 394-414 traverse the membrane as a helical segment; that stretch reads GGNPWGAVVYTWALVQLVLLA. Residues 415–419 are Extracellular-facing; sequence GKLNT. Residues 420-440 traverse the membrane as a helical segment; the sequence is IAGIVTVFYLIAYAAIDLACL. Residues 441 to 469 are Cytoplasmic-facing; sequence ALEWASAPNFRPTFRFFSWHTCLLGILSS. A helical transmembrane segment spans residues 470-490; it reads LVMMFLINPAYASGSIVLLLL. The Extracellular portion of the chain corresponds to 491–739; sequence LLGSIHFRSS…PLDLLRPQAS (249 aa). Residues 740-760 traverse the membrane as a helical segment; the sequence is AYVDVCSLFLLQMACILNMAA. Topologically, residues 761-899 are cytoplasmic; sequence SWRRYQLRVF…GLTPVTCTEL (139 aa).

This sequence belongs to the SLC12A transporter family.

It localises to the cell membrane. The protein localises to the lysosome membrane. Seems to correspond to a subunit of a multimeric transport system and thus, additional subunits may be required for its function. May play a role in lysosomal ion flux and osmoregulation. The polypeptide is Solute carrier family 12 member 9 (slc12a9) (Xenopus laevis (African clawed frog)).